The following is a 371-amino-acid chain: Cytochrome b (371 aa).

The next 4 membrane-spanning stretches (helical) occupy residues 25–45, 69–90, 105–125, and 170–190; these read FGSM…FLAI, WIMQ…YIHI, WLTG…GYVL, and FFAL…IHII. Positions 75 and 89 each coordinate heme b. Heme b contacts are provided by His-174 and His-188. Position 193 (His-193) interacts with a ubiquinone. 4 helical membrane passes run 218–238, 280–300, 312–332, and 339–358; these read YKDL…LSFM, LGGA…PFTH, LAQT…WAAT, and FLLI…IMNP.

It belongs to the cytochrome b family. The cytochrome bc1 complex contains 3 respiratory subunits (MT-CYB, CYC1 and UQCRFS1), 2 core proteins (UQCRC1 and UQCRC2) and probably 6 low-molecular weight proteins. It depends on heme b as a cofactor.

The protein resides in the mitochondrion inner membrane. Its function is as follows. Component of the ubiquinol-cytochrome c reductase complex (complex III or cytochrome b-c1 complex) that is part of the mitochondrial respiratory chain. The b-c1 complex mediates electron transfer from ubiquinol to cytochrome c. Contributes to the generation of a proton gradient across the mitochondrial membrane that is then used for ATP synthesis. The polypeptide is Cytochrome b (MT-CYB) (Laticauda colubrina (Yellow-lipped sea krait)).